We begin with the raw amino-acid sequence, 258 residues long: Eukaryotic translation initiation factor 3 subunit J (258 aa).

Positions 1–11 are enriched in low complexity; the sequence is MAAAAAAAGDS. The interval 1 to 108 is disordered; the sequence is MAAAAAAAGD…LEEPEEPKVL (108 aa). Residue alanine 2 is modified to N-acetylalanine. The sufficient for interaction with EIF3B stretch occupies residues 2–69; that stretch reads AAAAAAAGDS…KEEAEVKPEV (68 aa). Residues serine 11, serine 13, and serine 20 each carry the phosphoserine modification. A compositionally biased stretch (acidic residues) spans 40–59; sequence EGEDEDEDVKDNWDDDDDEK. The segment covering 60 to 106 has biased composition (basic and acidic residues); the sequence is KEEAEVKPEVKISEKKKIAEKIKEKERQQKKRQEEIKKRLEEPEEPK. Residues 70-135 are a coiled coil; the sequence is KISEKKKIAE…ESDLELAKET (66 aa). Lysine 106 participates in a covalent cross-link: Glycyl lysine isopeptide (Lys-Gly) (interchain with G-Cter in SUMO2). Threonine 109 bears the Phosphothreonine mark. The residue at position 127 (serine 127) is a Phosphoserine. Residues 217–238 are disordered; that stretch reads SKAKKKKKGVVPGGGLKATMKD. The promotes stable association with the 40S ribosome stretch occupies residues 243–258; it reads YGGYDGGYVQDYEDFM. Tyrosine 254 is subject to Phosphotyrosine.

Component of the eukaryotic translation initiation factor 3 (eIF-3) complex, which is composed of 13 subunits: EIF3A, EIF3B, EIF3C, EIF3D, EIF3E, EIF3F, EIF3G, EIF3H, EIF3I, EIF3J, EIF3K, EIF3L and EIF3M. The eIF-3 complex appears to include 3 stable modules: module A is composed of EIF3A, EIF3B, EIF3G and EIF3I; module B is composed of EIF3F, EIF3H, and EIF3M; and module C is composed of EIF3C, EIF3D, EIF3E, EIF3K and EIF3L. EIF3C of module C binds EIF3B of module A and EIF3H of module B, thereby linking the three modules. EIF3J is a labile subunit that binds to the eIF-3 complex via EIF3B. The eIF-3 complex interacts with RPS6KB1 under conditions of nutrient depletion. Mitogenic stimulation leads to binding and activation of a complex composed of MTOR and RPTOR, leading to phosphorylation and release of RPS6KB1 and binding of EIF4B to eIF-3. Post-translationally, phosphorylated. Phosphorylation is enhanced upon serum stimulation.

It is found in the cytoplasm. Functionally, component of the eukaryotic translation initiation factor 3 (eIF-3) complex, which is required for several steps in the initiation of protein synthesis. The eIF-3 complex associates with the 40S ribosome and facilitates the recruitment of eIF-1, eIF-1A, eIF-2:GTP:methionyl-tRNAi and eIF-5 to form the 43S pre-initiation complex (43S PIC). The eIF-3 complex stimulates mRNA recruitment to the 43S PIC and scanning of the mRNA for AUG recognition. The eIF-3 complex is also required for disassembly and recycling of post-termination ribosomal complexes and subsequently prevents premature joining of the 40S and 60S ribosomal subunits prior to initiation. The eIF-3 complex specifically targets and initiates translation of a subset of mRNAs involved in cell proliferation, including cell cycling, differentiation and apoptosis, and uses different modes of RNA stem-loop binding to exert either translational activation or repression. The chain is Eukaryotic translation initiation factor 3 subunit J from Homo sapiens (Human).